The sequence spans 555 residues: Hydroxylamine reductase (555 aa).

The [4Fe-4S] cluster site is built by C3, C6, C18, and C25. 8 residues coordinate hybrid [4Fe-2O-2S] cluster: H252, E276, C320, C407, C435, C460, E494, and K496. C407 is modified (cysteine persulfide).

It belongs to the HCP family. Requires [4Fe-4S] cluster as cofactor. The cofactor is hybrid [4Fe-2O-2S] cluster.

It localises to the cytoplasm. The enzyme catalyses A + NH4(+) + H2O = hydroxylamine + AH2 + H(+). Catalyzes the reduction of hydroxylamine to form NH(3) and H(2)O. The polypeptide is Hydroxylamine reductase (Burkholderia ambifaria (strain MC40-6)).